Reading from the N-terminus, the 149-residue chain is MIAENAPFWRRKTLEQLSQQEWESLCDGCGLCCLQKLEDEDDNSVYYTRIACKLLDLDTCQCSDYPNRFAHVPDCIQLTPGKADQFKWLPSTCGYRLVSEGKDLPAWHHLVCGDRQQVHEQRISQSGRMLSEHDVHEDDWEDHLIFRAS.

It belongs to the UPF0260 family.

The polypeptide is UPF0260 protein Pput_1301 (Pseudomonas putida (strain ATCC 700007 / DSM 6899 / JCM 31910 / BCRC 17059 / LMG 24140 / F1)).